We begin with the raw amino-acid sequence, 376 residues long: Heterodimeric geranylgeranyl pyrophosphate synthase large subunit 2 (376 aa).

Residues 1-24 (MEPQILFLYLSLFILSLNFFFTNL) form the signal peptide. Isopentenyl diphosphate is bound by residues Lys125, Arg128, and His157. Residues Asp164 and Asp170 each contribute to the Mg(2+) site. Arg175 is a binding site for dimethylallyl diphosphate. Arg176 lines the isopentenyl diphosphate pocket. Positions 261, 262, 299, 316, and 326 each coordinate dimethylallyl diphosphate.

It belongs to the FPP/GGPP synthase family. Monomer. Part of a heterodimeric geranyl(geranyl)diphosphate synthase. Interacts with GGR. Mg(2+) serves as cofactor. Mainly expressed in flowers.

It is found in the endoplasmic reticulum. The enzyme catalyses isopentenyl diphosphate + dimethylallyl diphosphate = (2E)-geranyl diphosphate + diphosphate. It catalyses the reaction isopentenyl diphosphate + (2E)-geranyl diphosphate = (2E,6E)-farnesyl diphosphate + diphosphate. The catalysed reaction is isopentenyl diphosphate + (2E,6E)-farnesyl diphosphate = (2E,6E,10E)-geranylgeranyl diphosphate + diphosphate. Its pathway is isoprenoid biosynthesis; farnesyl diphosphate biosynthesis; farnesyl diphosphate from geranyl diphosphate and isopentenyl diphosphate: step 1/1. It participates in isoprenoid biosynthesis; geranyl diphosphate biosynthesis; geranyl diphosphate from dimethylallyl diphosphate and isopentenyl diphosphate: step 1/1. It functions in the pathway isoprenoid biosynthesis; geranylgeranyl diphosphate biosynthesis; geranylgeranyl diphosphate from farnesyl diphosphate and isopentenyl diphosphate: step 1/1. Functionally, heterodimeric geranyl(geranyl)-diphosphate (GPP) synthase large subunit. In vitro, the large subunit catalyzes mainly the trans-addition of the three molecules of IPP onto DMAPP to form geranylgeranyl pyrophosphate while the small subunit alone is inactive. Upon association of the two subunits, the product profile is not changed. This Arabidopsis thaliana (Mouse-ear cress) protein is Heterodimeric geranylgeranyl pyrophosphate synthase large subunit 2 (GGPPS2).